The chain runs to 259 residues: Dihydroorotate dehydrogenase B (NAD(+)), electron transfer subunit (259 aa).

The FAD-binding FR-type domain maps to 1 to 101 (MKIEDCTVEE…MGPLGRGYDV (101 aa)). FAD-binding positions include 52-55 (RPIS), 69-71 (IYR), and 76-77 (GT). 4 residues coordinate [2Fe-2S] cluster: Cys-223, Cys-228, Cys-231, and Cys-245.

Belongs to the PyrK family. In terms of assembly, heterotetramer of 2 PyrK and 2 PyrD type B subunits. [2Fe-2S] cluster serves as cofactor. It depends on FAD as a cofactor.

The protein operates within pyrimidine metabolism; UMP biosynthesis via de novo pathway; orotate from (S)-dihydroorotate (NAD(+) route): step 1/1. Functionally, responsible for channeling the electrons from the oxidation of dihydroorotate from the FMN redox center in the PyrD type B subunit to the ultimate electron acceptor NAD(+). The polypeptide is Dihydroorotate dehydrogenase B (NAD(+)), electron transfer subunit (Fusobacterium nucleatum subsp. nucleatum (strain ATCC 25586 / DSM 15643 / BCRC 10681 / CIP 101130 / JCM 8532 / KCTC 2640 / LMG 13131 / VPI 4355)).